The following is a 311-amino-acid chain: Ribose-5-phosphate isomerase (311 aa).

A compositionally biased stretch (gly residues) spans 22–32; sequence AGGAASGGGGN. The disordered stretch occupies residues 22–67; the sequence is AGGAASGGGGNSWDLPGSHVRLPGRAQSGTRGGAGNTSTSCGDSNS. An Omega-N-methylarginine modification is found at R52. The segment covering 57–67 has biased composition (polar residues); it reads NTSTSCGDSNS. Position 106 is a phosphoserine (S106).

Belongs to the ribose 5-phosphate isomerase family.

The enzyme catalyses aldehydo-D-ribose 5-phosphate = D-ribulose 5-phosphate. Its pathway is carbohydrate degradation; pentose phosphate pathway; D-ribose 5-phosphate from D-ribulose 5-phosphate (non-oxidative stage): step 1/1. Functionally, catalyzes the reversible conversion of ribose-5-phosphate to ribulose 5-phosphate and participates in the first step of the non-oxidative branch of the pentose phosphate pathway. The protein is Ribose-5-phosphate isomerase of Homo sapiens (Human).